The primary structure comprises 394 residues: Cell division protein FtsZ (394 aa).

GTP-binding positions include 21–25 (GGGGN), 108–110 (GTG), Glu139, Arg143, and Asp187.

It belongs to the FtsZ family. As to quaternary structure, homodimer. Polymerizes to form a dynamic ring structure in a strictly GTP-dependent manner. Interacts directly with several other division proteins.

The protein resides in the cytoplasm. In terms of biological role, essential cell division protein that forms a contractile ring structure (Z ring) at the future cell division site. The regulation of the ring assembly controls the timing and the location of cell division. One of the functions of the FtsZ ring is to recruit other cell division proteins to the septum to produce a new cell wall between the dividing cells. Binds GTP and shows GTPase activity. In Azotobacter vinelandii, this protein is Cell division protein FtsZ.